A 591-amino-acid polypeptide reads, in one-letter code: L-lactate dehydrogenase (cytochrome) (591 aa).

The transit peptide at 1-80 (MLKYKPLLKI…LNWHNGQIDN (80 aa)) directs the protein to the mitochondrion. Residues 88 to 165 (KQKISPAEVA…APEKKLGPLQ (78 aa)) form the Cytochrome b5 heme-binding domain. Heme b is bound by residues His-123, His-146, Tyr-177, Gln-219, and Tyr-223. In terms of domain architecture, FMN hydroxy acid dehydrogenase spans 197 to 563 (PPLDNIINLY…KPDLLDLSTL (367 aa)). Tyr-223 contacts pyruvate. FMN is bound by residues 275-278 (SATA), Ser-308, and Gln-332. Residue Tyr-334 coordinates pyruvate. Thr-360 contacts FMN. A heme b-binding site is contributed by Lys-376. Lys-429 contacts FMN. Pyruvate-binding residues include His-453 and Arg-456. His-453 acts as the Proton acceptor in catalysis. FMN contacts are provided by residues 489 to 493 (DGGVR) and 512 to 513 (GR).

The protein in the N-terminal section; belongs to the cytochrome b5 family. In the C-terminal section; belongs to the FMN-dependent alpha-hydroxy acid dehydrogenase family. As to quaternary structure, homotetramer. Requires FMN as cofactor. The cofactor is heme b.

The protein resides in the mitochondrion intermembrane space. It carries out the reaction (S)-lactate + 2 Fe(III)-[cytochrome c] = 2 Fe(II)-[cytochrome c] + pyruvate + 2 H(+). In terms of biological role, catalyzes the oxidation of (S)-lactate (L-lactate) to pyruvate with subsequent transfer of electrons to cytochrome c. Is involved in the utilization of (S)-lactate as a sole source of carbon for growth. Can also use ferricyanide as an electron acceptor in vitro. This chain is L-lactate dehydrogenase (cytochrome) (CYB2), found in Saccharomyces cerevisiae (strain ATCC 204508 / S288c) (Baker's yeast).